Consider the following 423-residue polypeptide: Adenylosuccinate synthetase (423 aa).

The active-site Proton acceptor is Asp-12. Mg(2+) contacts are provided by Asp-12 and Gly-39. IMP is bound by residues 37–40 (NAGH), Thr-129, Arg-143, Asn-221, Thr-236, and Arg-300. 39–41 (GHS) provides a ligand contact to GTP. His-40 acts as the Proton donor in catalysis. A substrate-binding site is contributed by 296–302 (VSTGRKR). GTP contacts are provided by residues Arg-302, 328–330 (KLD), and 412–414 (GTG).

Belongs to the adenylosuccinate synthetase family. As to quaternary structure, homodimer. Requires Mg(2+) as cofactor.

It localises to the cytoplasm. The catalysed reaction is IMP + L-aspartate + GTP = N(6)-(1,2-dicarboxyethyl)-AMP + GDP + phosphate + 2 H(+). It functions in the pathway purine metabolism; AMP biosynthesis via de novo pathway; AMP from IMP: step 1/2. Plays an important role in the de novo pathway and in the salvage pathway of purine nucleotide biosynthesis. Catalyzes the first committed step in the biosynthesis of AMP from IMP. The polypeptide is Adenylosuccinate synthetase (Pyricularia oryzae (strain 70-15 / ATCC MYA-4617 / FGSC 8958) (Rice blast fungus)).